The primary structure comprises 380 residues: Tryptophan 2,3-dioxygenase (380 aa).

Substrate contacts are provided by residues 57-61 (FIITH) and Arg-128. Heme is bound at residue His-313. Substrate is bound at residue Thr-328.

The protein belongs to the tryptophan 2,3-dioxygenase family. Homotetramer. Dimer of dimers. Heme is required as a cofactor.

The enzyme catalyses L-tryptophan + O2 = N-formyl-L-kynurenine. It participates in amino-acid degradation; L-tryptophan degradation via kynurenine pathway; L-kynurenine from L-tryptophan: step 1/2. Its pathway is pigment biosynthesis; ommochrome biosynthesis. In terms of biological role, heme-dependent dioxygenase that catalyzes the oxidative cleavage of the L-tryptophan (L-Trp) pyrrole ring and converts L-tryptophan to N-formyl-L-kynurenine. Catalyzes the oxidative cleavage of the indole moiety. The polypeptide is Tryptophan 2,3-dioxygenase (Drosophila willistoni (Fruit fly)).